We begin with the raw amino-acid sequence, 206 residues long: MGGKWSKSRMGGWSTIRERMRRAEPVAEGVGAVSRDLDRRGAVTINNTASTNRDAAWLEAQEDGEEVGFPVRPQVPLRPMTYKGAFDLSHFLKEKGGLDGLIYSKQRQDILDLWVYNTQGYFPDWQNYTPGPGERFPLTFGWCFKLVPVNPQEVEQANEGENNSLLHPMSLHGMEDDGREVLMWKFDSRLALTHLARVKHPEYKDC.

Residue G2 is the site of N-myristoyl glycine; by host attachment. S6 is modified (phosphoserine; by host). An acidic; interacts with host PACS1 and PACS2; stabilizes the interaction of NEF/MHC-I with host AP1M1; necessary for MHC-I internalization region spans residues 62–66 (EDGEE). Residues 70–79 (PVRPQVPLRP) form an SH3-binding; interaction with Src family tyrosine kinases region. The PxxP; stabilizes the interaction of NEF/MHC-I with host AP1M1; necessary for MHC-I internalization signature appears at 73 to 76 (PQVP). The tract at residues 109 to 125 (DILDLWVYNTQGYFPDW) is mediates dimerization, Nef-PTE1 interaction. Positions 149–181 (VNPQEVEQANEGENNSLLHPMSLHGMEDDGREV) are binding to ATP6V1H. Residues 165 to 166 (LL) carry the Dileucine internalization motif; necessary for CD4 internalization motif. The short motif at 175-176 (ED) is the Diacidic; necessary for CD4 internalization element.

This sequence belongs to the lentivirus primate group Nef protein family. Monomer; cytosolic form. Homodimer; membrane bound form. Interacts with Nef associated p21-activated kinase (PAK2); this interaction activates PAK2. Associates with the Nef-MHC-I-AP1 complex; this complex is required for MHC-I internalization. Interacts (via C-terminus) with host PI3-kinase. Interacts with host PACS1; this interaction seems to be weak. Interacts with host PACS2. Interacts with host LCK and MAPK3; these interactions inhibit the kinase activity of the latter. Interacts with host ATP6V1H; this interaction may play a role in CD4 endocytosis. Associates with the CD4-Nef-AP2 complex; this complex is required for CD4 internalization. Interacts with host AP2 subunit alpha and AP2 subunit sigma2. Interacts with TCR-zeta chain; this interaction up-regulates the Fas ligand (FasL) surface expression. Interacts with host HCK, LYN, and SRC; these interactions activate the Src family kinases. Interacts with MAP3K5; this interaction inhibits the Fas and TNFR-mediated death signals. Interacts with beta-COP and PTE1. Interacts with human RACK1; this increases Nef phosphorylation by PKC. Interacts with TP53; this interaction decreases the half-life of TP53, protecting the infected cell against p53-mediated apoptosis. Post-translationally, the virion-associated Nef proteins are cleaved by the viral protease to release the soluble C-terminal core protein. Nef is probably cleaved concomitantly with viral structural proteins on maturation of virus particles. In terms of processing, myristoylated. Phosphorylated on serine residues, probably by host PKCdelta and theta.

It localises to the host cell membrane. Its subcellular location is the virion. The protein resides in the secreted. It is found in the host Golgi apparatus membrane. Functionally, factor of infectivity and pathogenicity, required for optimal virus replication. Alters numerous pathways of T-lymphocyte function and down-regulates immunity surface molecules in order to evade host defense and increase viral infectivity. Alters the functionality of other immunity cells, like dendritic cells, monocytes/macrophages and NK cells. In infected CD4(+) T-lymphocytes, down-regulates the surface MHC-I, mature MHC-II, CD4, CD28, CCR5 and CXCR4 molecules. Mediates internalization and degradation of host CD4 through the interaction of with the cytoplasmic tail of CD4, the recruitment of AP-2 (clathrin adapter protein complex 2), internalization through clathrin coated pits, and subsequent transport to endosomes and lysosomes for degradation. Diverts host MHC-I molecules to the trans-Golgi network-associated endosomal compartments by an endocytic pathway to finally target them for degradation. MHC-I down-regulation may involve AP-1 (clathrin adapter protein complex 1) or possibly Src family kinase-ZAP70/Syk-PI3K cascade recruited by PACS2. In consequence infected cells are masked for immune recognition by cytotoxic T-lymphocytes. Decreasing the number of immune receptors also prevents reinfection by more HIV particles (superinfection). Down-regulates host SERINC3 and SERINC5 thereby excluding these proteins from the viral particles. Virion infectivity is drastically higher when SERINC3 or SERINC5 are excluded from the viral envelope, because these host antiviral proteins impair the membrane fusion event necessary for subsequent virion penetration. In terms of biological role, bypasses host T-cell signaling by inducing a transcriptional program nearly identical to that of anti-CD3 cell activation. Interaction with TCR-zeta chain up-regulates the Fas ligand (FasL). Increasing surface FasL molecules and decreasing surface MHC-I molecules on infected CD4(+) cells send attacking cytotoxic CD8+ T-lymphocytes into apoptosis. Its function is as follows. Plays a role in optimizing the host cell environment for viral replication without causing cell death by apoptosis. Protects the infected cells from apoptosis in order to keep them alive until the next virus generation is ready to strike. Inhibits the Fas and TNFR-mediated death signals by blocking MAP3K5/ASK1. Decreases the half-life of TP53, protecting the infected cell against p53-mediated apoptosis. Inhibits the apoptotic signals regulated by the Bcl-2 family proteins through the formation of a Nef/PI3-kinase/PAK2 complex that leads to activation of PAK2 and induces phosphorylation of host BAD. Functionally, extracellular Nef protein targets CD4(+) T-lymphocytes for apoptosis by interacting with CXCR4 surface receptors. The protein is Protein Nef of Homo sapiens (Human).